Reading from the N-terminus, the 181-residue chain is 30 kDa heat shock protein (181 aa).

In terms of domain architecture, sHSP spans Ala-33–Gln-181. Positions Gly-79 to Glu-115 are enriched in basic and acidic residues. Residues Gly-79–Ser-127 form a disordered region.

This sequence belongs to the small heat shock protein (HSP20) family.

The protein is 30 kDa heat shock protein (hsp30) of Emericella nidulans (strain FGSC A4 / ATCC 38163 / CBS 112.46 / NRRL 194 / M139) (Aspergillus nidulans).